The sequence spans 318 residues: Thymidylate synthase (318 aa).

Residues arginine 25 and 180 to 181 (RR) contribute to the dUMP site. The active-site Nucleophile is the cysteine 200. DUMP contacts are provided by residues 220–223 (RSGD), asparagine 231, and 261–263 (HIY). Aspartate 223 contacts (6R)-5,10-methylene-5,6,7,8-tetrahydrofolate. Alanine 317 is a binding site for (6R)-5,10-methylene-5,6,7,8-tetrahydrofolate.

It belongs to the thymidylate synthase family. Bacterial-type ThyA subfamily. Homodimer.

The protein resides in the cytoplasm. It catalyses the reaction dUMP + (6R)-5,10-methylene-5,6,7,8-tetrahydrofolate = 7,8-dihydrofolate + dTMP. Its pathway is pyrimidine metabolism; dTTP biosynthesis. Functionally, catalyzes the reductive methylation of 2'-deoxyuridine-5'-monophosphate (dUMP) to 2'-deoxythymidine-5'-monophosphate (dTMP) while utilizing 5,10-methylenetetrahydrofolate (mTHF) as the methyl donor and reductant in the reaction, yielding dihydrofolate (DHF) as a by-product. This enzymatic reaction provides an intracellular de novo source of dTMP, an essential precursor for DNA biosynthesis. The protein is Thymidylate synthase of Bacillus thuringiensis subsp. konkukian (strain 97-27).